A 1764-amino-acid chain; its full sequence is Cilia- and flagella-associated protein 44 (1764 aa).

WD repeat units lie at residues 115–157 (GTER…IVLR), 160–199 (AFSQDVYGVAFSPYFEGQLTTSGQGHIRFWRMASTFTGLK), 208–248 (GNVE…VVLT), 255–294 (CHDGPIEALLLDRPAGRVLSAGADGRVRMWDFGAVNDAEP), 361–400 (HPAGAVAGLQLSARTHTALVASADGCLRALDYVSGAVLAE), 454–493 (AHKGAVAALAVSADGGRLVSAGEDGSVFFFDLTAQPQPGT), and 495–534 (VPGMPACGLLAPRAFIKLPSGSGTVTCGVWEAAEGGGVLL). Residues 570–654 (QLVVPKPKRP…GGPSSTTGEL (85 aa)) are disordered. Over residues 575-584 (KPKRPKKKKG) the composition is skewed to basic residues. Basic and acidic residues-rich tracts occupy residues 585 to 596 (KNDGEEGDKEGG) and 604 to 628 (GEDKGGEQADGEGGSKEGGEEGRAA). Residues 629 to 641 (EEEEEEEADDEAD) show a composition bias toward acidic residues. WD repeat units lie at residues 649–692 (STTG…PLAA), 707–752 (AHAG…LHDM), and 753–791 (QSGRVSGLGLSHDGAYLVTAAADGALHLLALALPPELAP). A coiled-coil region spans residues 821 to 850 (YTLEEEKQQAERDQQVREAEEKKLSVRQRL). 2 disordered regions span residues 972 to 1003 (AAAGGEGGAGGRDTDARGKGSDTGGGPGGDAA) and 1426 to 1468 (KKKA…CPPG). Residues 1434 to 1462 (GEDDYDSEEDEEDEDMGDDEVDDDDDGGE) are compositionally biased toward acidic residues. 3 coiled-coil regions span residues 1479–1517 (DLREKRLDEEDMIAEFTKTIEVLRKEKEALAKKQRLVEQ), 1567–1674 (LVFS…DAKI), and 1729–1758 (EERDALVALVNAQAAELDRLKGQLLALRRK).

This sequence belongs to the CFAP44 family.

The protein resides in the cell projection. The protein localises to the cilium. It localises to the flagellum. Its subcellular location is the cytoplasm. It is found in the cytoskeleton. The protein resides in the flagellum axoneme. In terms of biological role, flagellar protein involved in sperm flagellum axoneme organization and function. The protein is Cilia- and flagella-associated protein 44 of Chlamydomonas reinhardtii (Chlamydomonas smithii).